The following is a 132-amino-acid chain: Small ribosomal subunit protein uS11 (132 aa).

Positions 110–132 (IEDVTPVPSDSTRRKGGRRGRRL) are disordered. Residues 123–132 (RKGGRRGRRL) show a composition bias toward basic residues.

This sequence belongs to the universal ribosomal protein uS11 family. As to quaternary structure, component of the small ribosomal subunit. Mature ribosomes consist of a small (40S) and a large (60S) subunit. The 40S subunit contains about 32 different proteins and 1 molecule of RNA (18S). The 60S subunit contains 45 different proteins and 3 molecules of RNA (25S, 5.8S and 5S).

It localises to the cytoplasm. Its function is as follows. Component of the ribosome, a large ribonucleoprotein complex responsible for the synthesis of proteins in the cell. The small ribosomal subunit (SSU) binds messenger RNAs (mRNAs) and translates the encoded message by selecting cognate aminoacyl-transfer RNA (tRNA) molecules. The large subunit (LSU) contains the ribosomal catalytic site termed the peptidyl transferase center (PTC), which catalyzes the formation of peptide bonds, thereby polymerizing the amino acids delivered by tRNAs into a polypeptide chain. The nascent polypeptides leave the ribosome through a tunnel in the LSU and interact with protein factors that function in enzymatic processing, targeting, and the membrane insertion of nascent chains at the exit of the ribosomal tunnel. RPS14B is involved in nucleolar processing of pre-18S ribosomal RNA and ribosome assembly. This is Small ribosomal subunit protein uS11 (RPS14B) from Candida albicans (strain SC5314 / ATCC MYA-2876) (Yeast).